The sequence spans 176 residues: ATP-dependent protease subunit HslV (176 aa).

T2 is a catalytic residue. Residues A157, C160, and T163 each coordinate Na(+).

It belongs to the peptidase T1B family. HslV subfamily. In terms of assembly, a double ring-shaped homohexamer of HslV is capped on each side by a ring-shaped HslU homohexamer. The assembly of the HslU/HslV complex is dependent on binding of ATP.

The protein resides in the cytoplasm. The catalysed reaction is ATP-dependent cleavage of peptide bonds with broad specificity.. With respect to regulation, allosterically activated by HslU binding. Protease subunit of a proteasome-like degradation complex believed to be a general protein degrading machinery. This chain is ATP-dependent protease subunit HslV, found in Buchnera aphidicola subsp. Acyrthosiphon pisum (strain APS) (Acyrthosiphon pisum symbiotic bacterium).